The chain runs to 607 residues: UvrABC system protein C (607 aa).

A GIY-YIG domain is found at 16-94 (GRPGVYRMFD…IKEWRPPYNI (79 aa)). The 36-residue stretch at 203–238 (NALSEELSASMEKASMALEFERAAELRDQISMLRRV) folds into the UVR domain.

Belongs to the UvrC family. Interacts with UvrB in an incision complex.

It is found in the cytoplasm. The UvrABC repair system catalyzes the recognition and processing of DNA lesions. UvrC both incises the 5' and 3' sides of the lesion. The N-terminal half is responsible for the 3' incision and the C-terminal half is responsible for the 5' incision. This is UvrABC system protein C from Ectopseudomonas mendocina (strain ymp) (Pseudomonas mendocina).